We begin with the raw amino-acid sequence, 447 residues long: Monocarboxylate transporter 11 (447 aa).

The Cytoplasmic portion of the chain corresponds to 1–11 (MTPKPAGPPDG). A run of 12 helical transmembrane segments spans residues 12 to 32 (GWGW…YGLL), 54 to 74 (AWVS…GSAL), 80 to 100 (ARPV…FSAF), 107 to 127 (LYLG…APAL), 139 to 159 (VLAV…LAPA), 162 to 182 (FLLD…VTLH), 219 to 239 (AFSV…VPYV), 249 to 269 (GMGG…DACA), 288 to 308 (LVVF…VPTV), 330 to 350 (GSYA…GGVV), 354 to 374 (GLVM…SGFL), and 383 to 403 (ASFL…MGLP). Topologically, residues 404–447 (RALPSCRPASPPATPPPERGELLPVPQVSLLSAGGTGSIRDTTC) are cytoplasmic.

This sequence belongs to the major facilitator superfamily. Monocarboxylate porter (TC 2.A.1.13) family. As to quaternary structure, interacts with isoform 2 of BSG.

Its subcellular location is the endoplasmic reticulum membrane. The protein resides in the cell membrane. It catalyses the reaction pyruvate(out) + H(+)(out) = pyruvate(in) + H(+)(in). In terms of biological role, proton-linked monocarboxylate transporter. It catalyzes the transport of pyruvate across the plasma membrane. Probably involved in hepatic lipid metabolism: overexpression results in an increase of triacylglycerol(TAG) levels, small increases in intracellular diacylglycerols and decreases in lysophosphatidylcholine, cholesterol ester and sphingomyelin lipids. This chain is Monocarboxylate transporter 11 (Slc16a11), found in Mus musculus (Mouse).